The primary structure comprises 431 residues: Enolase (431 aa).

Gln-163 contributes to the (2R)-2-phosphoglycerate binding site. Glu-205 functions as the Proton donor in the catalytic mechanism. Residues Asp-242, Glu-288, and Asp-315 each contribute to the Mg(2+) site. Positions 340, 369, 370, and 391 each coordinate (2R)-2-phosphoglycerate. Lys-340 acts as the Proton acceptor in catalysis.

The protein belongs to the enolase family. Mg(2+) serves as cofactor.

The protein resides in the cytoplasm. The protein localises to the secreted. It is found in the cell surface. The catalysed reaction is (2R)-2-phosphoglycerate = phosphoenolpyruvate + H2O. It functions in the pathway carbohydrate degradation; glycolysis; pyruvate from D-glyceraldehyde 3-phosphate: step 4/5. Catalyzes the reversible conversion of 2-phosphoglycerate (2-PG) into phosphoenolpyruvate (PEP). It is essential for the degradation of carbohydrates via glycolysis. The sequence is that of Enolase from Bacillus cereus (strain AH187).